Here is a 427-residue protein sequence, read N- to C-terminus: F-box protein At2g16450 (427 aa).

Residues 1–45 enclose the F-box domain; it reads MNPSPITIDLILEILSRLPAKSVRRFHCVSKRWASIFGSPYFKEL.

This chain is F-box protein At2g16450, found in Arabidopsis thaliana (Mouse-ear cress).